A 585-amino-acid polypeptide reads, in one-letter code: tRNA-guanine(15) transglycosylase (585 aa).

Residue aspartate 95 is the Nucleophile of the active site. Aspartate 130 and alanine 196 together coordinate substrate. Zn(2+)-binding residues include cysteine 279, cysteine 281, and cysteine 284. Positions 507 to 582 constitute a PUA domain; the sequence is VMRVVVNKEA…RAVKTRRGVE (76 aa).

Belongs to the archaeosine tRNA-ribosyltransferase family. It depends on Zn(2+) as a cofactor.

It carries out the reaction guanosine(15) in tRNA + 7-cyano-7-deazaguanine = 7-cyano-7-carbaguanosine(15) in tRNA + guanine. It functions in the pathway tRNA modification; archaeosine-tRNA biosynthesis. Functionally, exchanges the guanine residue with 7-cyano-7-deazaguanine (preQ0) at position 15 in the dihydrouridine loop (D-loop) of archaeal tRNAs. In Pyrococcus furiosus (strain ATCC 43587 / DSM 3638 / JCM 8422 / Vc1), this protein is tRNA-guanine(15) transglycosylase.